Reading from the N-terminus, the 126-residue chain is Aspartate 1-decarboxylase (126 aa).

The active-site Schiff-base intermediate with substrate; via pyruvic acid is the Ser25. The residue at position 25 (Ser25) is a Pyruvic acid (Ser). Thr57 is a binding site for substrate. Tyr58 functions as the Proton donor in the catalytic mechanism. Residue 73-75 (GGA) coordinates substrate.

This sequence belongs to the PanD family. In terms of assembly, heterooctamer of four alpha and four beta subunits. Pyruvate serves as cofactor. Is synthesized initially as an inactive proenzyme, which is activated by self-cleavage at a specific serine bond to produce a beta-subunit with a hydroxyl group at its C-terminus and an alpha-subunit with a pyruvoyl group at its N-terminus.

The protein resides in the cytoplasm. It catalyses the reaction L-aspartate + H(+) = beta-alanine + CO2. Its pathway is cofactor biosynthesis; (R)-pantothenate biosynthesis; beta-alanine from L-aspartate: step 1/1. In terms of biological role, catalyzes the pyruvoyl-dependent decarboxylation of aspartate to produce beta-alanine. This is Aspartate 1-decarboxylase from Xylella fastidiosa (strain Temecula1 / ATCC 700964).